The primary structure comprises 258 residues: Probable S-methyl-5'-thioinosine phosphorylase (258 aa).

53–54 (RH) contributes to the phosphate binding site. A substrate-binding site is contributed by methionine 180. Threonine 181 is a phosphate binding site. Residue 204 to 206 (NQA) participates in substrate binding.

The protein belongs to the PNP/MTAP phosphorylase family. MTAP subfamily. Homotrimer.

The catalysed reaction is S-methyl-5'-thioinosine + phosphate = 5-(methylsulfanyl)-alpha-D-ribose 1-phosphate + hypoxanthine. It functions in the pathway purine metabolism; purine nucleoside salvage. Catalyzes the reversible phosphorylation of S-methyl-5'-thioinosine (MTI) to hypoxanthine and 5-methylthioribose-1-phosphate. Involved in the breakdown of S-methyl-5'-thioadenosine (MTA), a major by-product of polyamine biosynthesis. Catabolism of (MTA) occurs via deamination to MTI and phosphorolysis to hypoxanthine. The protein is Probable S-methyl-5'-thioinosine phosphorylase of Methanosarcina acetivorans (strain ATCC 35395 / DSM 2834 / JCM 12185 / C2A).